The sequence spans 63 residues: Large ribosomal subunit protein bL28 (63 aa).

The protein belongs to the bacterial ribosomal protein bL28 family.

This chain is Large ribosomal subunit protein bL28, found in Geobacter metallireducens (strain ATCC 53774 / DSM 7210 / GS-15).